The sequence spans 417 residues: Transmembrane protease serine 11D (417 aa).

At 1-17 (MYRPRSMVSPSRFFNPF) the chain is on the cytoplasmic side. A helical; Signal-anchor for type II membrane protein transmembrane segment spans residues 18-38 (MVALIVIITVGLLAMTAGLLI). Over 39-417 (HFLAFDKRAY…RNWIRQQTGI (379 aa)) the chain is Extracellular. Residues 46 to 162 (RAYFYHSNFH…SNGITSLTDQ (117 aa)) enclose the SEA domain. 4 disulfide bridges follow: C172-C291, C211-C227, C336-C352, and C363-C392. A Peptidase S1 domain is found at 186-416 (IIGGTQAETG…YRNWIRQQTG (231 aa)). Residues H226 and D271 each act as charge relay system in the active site. Catalysis depends on S367, which acts as the Charge relay system.

The protein belongs to the peptidase S1 family. In terms of assembly, monomer. As to expression, isoform 1 and isoform 2 are expressed in the esophagus, tongue and trachea. Isoform 2 is also highly expressed in the adrenal cortex and heart.

The protein localises to the cell membrane. It localises to the secreted. May play some biological role in the host defense system on the mucous membrane independently of or in cooperation with other substances in airway mucous or bronchial secretions. Plays a role in the proteolytic processing of ACE2. Preferentially cleaves the C-terminal side of arginine residues at the P1 position of certain peptides. Isoform 2 may play a key role in regulating adrenal proliferation by specifically cleaving N-POMC. The polypeptide is Transmembrane protease serine 11D (Tmprss11d) (Rattus norvegicus (Rat)).